A 354-amino-acid chain; its full sequence is Annexin A13 (354 aa).

Annexin repeat units follow at residues 26–97, 98–177, 203–275, and 279–350; these read NDPN…MLLT, DTDK…ALLQ, NLVE…LTLN, and NRPK…ALIG. Positions 39, 41, 43, 44, 46, 83, 111, 113, 115, 118, 163, 265, 292, 294, 295, 296, and 336 each coordinate Ca(2+).

The protein belongs to the annexin family. As to quaternary structure, homodimer.

It is found in the tegument. The protein resides in the secreted. It localises to the extracellular exosome. The protein localises to the host cell. In terms of biological role, involved in reproduction of the worm. Involved in host-parasite interaction. Delivered into the host cell by means of parasite exosomes. Binds to acidic phospholipid membranes in a calcium-dependent manner in vitro. Causes aggregation of liposomes in the presence of calcium, but not in its absence. Likely to promote membrane fusion. May provide structural integrity within the tegument. The polypeptide is Annexin A13 (Schistosoma japonicum (Blood fluke)).